Reading from the N-terminus, the 263-residue chain is 1-(5-phosphoribosyl)-5-[(5-phosphoribosylamino)methylideneamino] imidazole-4-carboxamide isomerase (263 aa).

It belongs to the HisA/HisF family.

It is found in the cytoplasm. It catalyses the reaction 1-(5-phospho-beta-D-ribosyl)-5-[(5-phospho-beta-D-ribosylamino)methylideneamino]imidazole-4-carboxamide = 5-[(5-phospho-1-deoxy-D-ribulos-1-ylimino)methylamino]-1-(5-phospho-beta-D-ribosyl)imidazole-4-carboxamide. The protein operates within amino-acid biosynthesis; L-histidine biosynthesis; L-histidine from 5-phospho-alpha-D-ribose 1-diphosphate: step 4/9. In Eremothecium gossypii (strain ATCC 10895 / CBS 109.51 / FGSC 9923 / NRRL Y-1056) (Yeast), this protein is 1-(5-phosphoribosyl)-5-[(5-phosphoribosylamino)methylideneamino] imidazole-4-carboxamide isomerase (HIS6).